The following is a 417-amino-acid chain: UDP-N-acetylglucosamine 1-carboxyvinyltransferase (417 aa).

22–23 (KN) contacts phosphoenolpyruvate. R91 lines the UDP-N-acetyl-alpha-D-glucosamine pocket. The active-site Proton donor is C115. C115 is modified (2-(S-cysteinyl)pyruvic acid O-phosphothioketal). UDP-N-acetyl-alpha-D-glucosamine is bound by residues 120–124 (RPVDL), D304, and I326.

This sequence belongs to the EPSP synthase family. MurA subfamily.

The protein localises to the cytoplasm. It catalyses the reaction phosphoenolpyruvate + UDP-N-acetyl-alpha-D-glucosamine = UDP-N-acetyl-3-O-(1-carboxyvinyl)-alpha-D-glucosamine + phosphate. Its pathway is cell wall biogenesis; peptidoglycan biosynthesis. Functionally, cell wall formation. Adds enolpyruvyl to UDP-N-acetylglucosamine. The polypeptide is UDP-N-acetylglucosamine 1-carboxyvinyltransferase (Nitratidesulfovibrio vulgaris (strain DP4) (Desulfovibrio vulgaris)).